The following is a 490-amino-acid chain: Betaine aldehyde dehydrogenase (490 aa).

Residues T26, I27, and D93 each contribute to the K(+) site. Residue 150-152 (GAW) participates in NAD(+) binding. The active-site Charge relay system is the K162. NAD(+) is bound at residue 176 to 179 (KPSE). K(+) is bound at residue V180. 230 to 233 (GTST) contributes to the NAD(+) binding site. Residue L246 participates in K(+) binding. The active-site Proton acceptor is E252. NAD(+) is bound by residues G254, C286, and E387. The Nucleophile role is filled by C286. The residue at position 286 (C286) is a Cysteine sulfenic acid (-SOH). K(+) is bound by residues K457 and G460. E464 serves as the catalytic Charge relay system.

This sequence belongs to the aldehyde dehydrogenase family. As to quaternary structure, dimer of dimers. K(+) is required as a cofactor.

It carries out the reaction betaine aldehyde + NAD(+) + H2O = glycine betaine + NADH + 2 H(+). It functions in the pathway amine and polyamine biosynthesis; betaine biosynthesis via choline pathway; betaine from betaine aldehyde: step 1/1. Involved in the biosynthesis of the osmoprotectant glycine betaine. Catalyzes the irreversible oxidation of betaine aldehyde to the corresponding acid. The sequence is that of Betaine aldehyde dehydrogenase from Pseudomonas paraeruginosa (strain DSM 24068 / PA7) (Pseudomonas aeruginosa (strain PA7)).